Here is a 210-residue protein sequence, read N- to C-terminus: uncharacterized protein (210 aa).

It is found in the mitochondrion. This is an uncharacterized protein from Schizosaccharomyces pombe (strain 972 / ATCC 24843) (Fission yeast).